The chain runs to 216 residues: MQAQTLHIRHLGMQDYESTWHAMQEYTDTRDSDSQDELWIVEHPPVFTQGQAGKSEHILNPGDIPVIQVDRGGQVTYHGPGQLVVYPLIDIKRNKLGVRQLVNNIEQSIIDMLAYYAINAYAKADAPGVYVTEQKIASLGLRIRKGCSFHGLALNVDMDLAPFQRINPCGYAGLEMVQCKALGGPQTVLEAGDKLIQTFSQIMGYQQLVHHQGLAE.

A BPL/LPL catalytic domain is found at 32–207 (SDSQDELWIV…TFSQIMGYQQ (176 aa)). Residues 71–78 (RGGQVTYH), 138–140 (SLG), and 151–153 (GLA) contribute to the substrate site. The active-site Acyl-thioester intermediate is the Cys-169.

This sequence belongs to the LipB family.

It localises to the cytoplasm. It catalyses the reaction octanoyl-[ACP] + L-lysyl-[protein] = N(6)-octanoyl-L-lysyl-[protein] + holo-[ACP] + H(+). The protein operates within protein modification; protein lipoylation via endogenous pathway; protein N(6)-(lipoyl)lysine from octanoyl-[acyl-carrier-protein]: step 1/2. Catalyzes the transfer of endogenously produced octanoic acid from octanoyl-acyl-carrier-protein onto the lipoyl domains of lipoate-dependent enzymes. Lipoyl-ACP can also act as a substrate although octanoyl-ACP is likely to be the physiological substrate. The chain is Octanoyltransferase from Shewanella frigidimarina (strain NCIMB 400).